We begin with the raw amino-acid sequence, 343 residues long: UDP-3-O-acylglucosamine N-acyltransferase (343 aa).

His238 serves as the catalytic Proton acceptor.

It belongs to the transferase hexapeptide repeat family. LpxD subfamily. Homotrimer.

It carries out the reaction a UDP-3-O-[(3R)-3-hydroxyacyl]-alpha-D-glucosamine + a (3R)-hydroxyacyl-[ACP] = a UDP-2-N,3-O-bis[(3R)-3-hydroxyacyl]-alpha-D-glucosamine + holo-[ACP] + H(+). Its pathway is bacterial outer membrane biogenesis; LPS lipid A biosynthesis. Its function is as follows. Catalyzes the N-acylation of UDP-3-O-acylglucosamine using 3-hydroxyacyl-ACP as the acyl donor. Is involved in the biosynthesis of lipid A, a phosphorylated glycolipid that anchors the lipopolysaccharide to the outer membrane of the cell. The polypeptide is UDP-3-O-acylglucosamine N-acyltransferase (Marinomonas sp. (strain MWYL1)).